A 96-amino-acid polypeptide reads, in one-letter code: ATP synthase subunit c (96 aa).

Helical transmembrane passes span His24–Gly44 and Ala75–Ala95.

It belongs to the ATPase C chain family. As to quaternary structure, F-type ATPases have 2 components, F(1) - the catalytic core - and F(0) - the membrane proton channel. F(1) has five subunits: alpha(3), beta(3), gamma(1), delta(1), epsilon(1). F(0) has three main subunits: a(1), b(2) and c(10-14). The alpha and beta chains form an alternating ring which encloses part of the gamma chain. F(1) is attached to F(0) by a central stalk formed by the gamma and epsilon chains, while a peripheral stalk is formed by the delta and b chains.

The protein resides in the cell membrane. Its function is as follows. F(1)F(0) ATP synthase produces ATP from ADP in the presence of a proton or sodium gradient. F-type ATPases consist of two structural domains, F(1) containing the extramembraneous catalytic core and F(0) containing the membrane proton channel, linked together by a central stalk and a peripheral stalk. During catalysis, ATP synthesis in the catalytic domain of F(1) is coupled via a rotary mechanism of the central stalk subunits to proton translocation. Functionally, key component of the F(0) channel; it plays a direct role in translocation across the membrane. A homomeric c-ring of between 10-14 subunits forms the central stalk rotor element with the F(1) delta and epsilon subunits. In Mycoplasmoides gallisepticum (strain R(low / passage 15 / clone 2)) (Mycoplasma gallisepticum), this protein is ATP synthase subunit c.